A 299-amino-acid chain; its full sequence is Probable lipid kinase YegS (299 aa).

In terms of domain architecture, DAGKc spans 2–133 (AEFPASLLIL…IDMAQVNKQT (132 aa)). ATP is bound by residues Thr40, 66 to 72 (GDGTINE), and Thr95. Residues Leu215, Asp218, and Leu220 each coordinate Mg(2+). The Proton acceptor role is filled by Glu271.

This sequence belongs to the diacylglycerol/lipid kinase family. YegS lipid kinase subfamily. Requires Mg(2+) as cofactor. Ca(2+) serves as cofactor.

The protein localises to the cytoplasm. Its function is as follows. Probably phosphorylates lipids; the in vivo substrate is unknown. This chain is Probable lipid kinase YegS, found in Escherichia coli (strain 55989 / EAEC).